A 520-amino-acid polypeptide reads, in one-letter code: Probable protein phosphatase 2C 39 (520 aa).

The PPM-type phosphatase domain occupies 160-507 (FLTSTEIKMA…DDVTIIVIIL (348 aa)). Residues aspartate 195, glycine 196, aspartate 435, and aspartate 498 each contribute to the Mn(2+) site.

Belongs to the PP2C family. The cofactor is Mg(2+). Mn(2+) serves as cofactor.

It carries out the reaction O-phospho-L-seryl-[protein] + H2O = L-seryl-[protein] + phosphate. The catalysed reaction is O-phospho-L-threonyl-[protein] + H2O = L-threonyl-[protein] + phosphate. The polypeptide is Probable protein phosphatase 2C 39 (Oryza sativa subsp. japonica (Rice)).